A 448-amino-acid polypeptide reads, in one-letter code: Ribulose bisphosphate carboxylase large chain (448 aa).

Residues 1–2 constitute a propeptide that is removed on maturation; the sequence is MS. Residue Pro-3 is modified to N-acetylproline. Lys-14 carries the post-translational modification N6,N6,N6-trimethyllysine. Residues Asn-122 and Thr-172 each coordinate substrate. The active-site Proton acceptor is Lys-174. Lys-176 is a binding site for substrate. Mg(2+) is bound by residues Lys-200, Asp-202, and Glu-203. Lys-200 is subject to N6-carboxylysine. His-293 (proton acceptor) is an active-site residue. The substrate site is built by Arg-294, His-326, and Ser-378.

The protein belongs to the RuBisCO large chain family. Type I subfamily. As to quaternary structure, heterohexadecamer of 8 large chains and 8 small chains; disulfide-linked. The disulfide link is formed within the large subunit homodimers. The cofactor is Mg(2+). Post-translationally, the disulfide bond which can form in the large chain dimeric partners within the hexadecamer appears to be associated with oxidative stress and protein turnover.

Its subcellular location is the plastid. It localises to the chloroplast. The catalysed reaction is 2 (2R)-3-phosphoglycerate + 2 H(+) = D-ribulose 1,5-bisphosphate + CO2 + H2O. It catalyses the reaction D-ribulose 1,5-bisphosphate + O2 = 2-phosphoglycolate + (2R)-3-phosphoglycerate + 2 H(+). Functionally, ruBisCO catalyzes two reactions: the carboxylation of D-ribulose 1,5-bisphosphate, the primary event in carbon dioxide fixation, as well as the oxidative fragmentation of the pentose substrate in the photorespiration process. Both reactions occur simultaneously and in competition at the same active site. This is Ribulose bisphosphate carboxylase large chain from Dichapetalum crassifolium.